A 55-amino-acid polypeptide reads, in one-letter code: Preprotein translocase subunit SecG (55 aa).

The Cytoplasmic portion of the chain corresponds to 1–29 (MAKKSGSGLQSSAGLMRYYEADKNAVQVQ). The helical transmembrane segment at 30 to 51 (PKVVLIVGAIVGIAVLFLSAVN) threads the bilayer. Over 52–55 (GFWP) the chain is Extracellular.

This sequence belongs to the SEC61-beta family. As to quaternary structure, component of the protein translocase complex. Heterotrimer consisting of alpha (SecY), beta (SecG) and gamma (SecE) subunits. Can form oligomers of the heterotrimer.

The protein resides in the cell membrane. Its function is as follows. Involved in protein export. The function of the beta subunit is unknown, but it may be involved in stabilization of the trimeric complex. In Methanosarcina barkeri (strain Fusaro / DSM 804), this protein is Preprotein translocase subunit SecG.